The primary structure comprises 339 residues: MRVLRVTFLWALLLLVAFSASVYAAEDEPKTPESTSSANPRDNDPVIQEIRGLRNSGMKLNDAKDFKGAIAKLRGAITLLHDRVFGEGREAITDPSDISQDAALYAQILNDYGTVLIRAKQYDEAIEVLEDSVAMVEKIYGDSHPSLGLSLRSLADAYMAKEEYKMAIKKYKTLRKHVKKGLETTHEAYIEASLRIAEGYKKLGNTKKNLKVLKDAVEAQNGEINGLTTGIAELYMELSTAHVAVGEIDDALRAAEVASAIFRQRDGEDTLSFAFSLNALAGVKMRQKKVDEAIKLLEQAHRIAVQIYGEKDPITQASAKTLREVKEYKLDLQAQKDEL.

The N-terminal stretch at 1–24 (MRVLRVTFLWALLLLVAFSASVYA) is a signal peptide. The RxLR-dEER motif lies at 51–74 (RGLRNSGMKLNDAKDFKGAIAKLR). 4 TPR repeats span residues 106–139 (AQIL…VEKI), 190–223 (IEAS…QNGE), 232–265 (AELY…FRQR), and 274–307 (AFSL…AVQI).

This sequence belongs to the RxLR effector family.

It is found in the secreted. The protein resides in the host nucleus. It localises to the host cytoplasm. In terms of biological role, effector that suppresses flg22-induced post-translational MAP kinase activation in tomato but not in Arabidopsis. The perception of highly conserved pathogen- or microbe-associated molecular patterns (PAMPs/MAMPs), such as flg22, triggers converging signaling pathways recruiting MAP kinase cascades and inducing transcriptional re-programming, yielding a generic antimicrobial response. This Phytophthora infestans (strain T30-4) (Potato late blight agent) protein is RxLR effector protein SFI4.